A 722-amino-acid chain; its full sequence is MAR-binding filament-like protein 1-1 (722 aa).

The segment at 1 to 20 (MGSSCFPQSPLSHSLFSSSS) is disordered. A chloroplast-targeting transit peptide spans 1–50 (MGSSCFPQSPLSHSLFSSSSLSSSQFTPLLFSPRNAQKCKKKMPAMACIH). The N-terminal 34 residues, 51–84 (SENQKESEFCSRRTILFVGFSVLPLLSLRANAFE), are a transit peptide targeting the thylakoid. Topologically, residues 85 to 112 (GLSVDSQVKAQPQKEETEQTIQGNAENP) are lumenal, thylakoid. Residues 113–133 (FFSLLNGLGVFGSGVLGSLYA) traverse the membrane as a helical segment. The Stromal segment spans residues 134-722 (LARNEKAVSD…TQPASQQESS (589 aa)). Residues 146–679 (IESMKNKLKE…KGEILRLRTQ (534 aa)) adopt a coiled-coil conformation. The tract at residues 687–722 (VNNEEKVEAGEKAAVTVKRTRRRKTATQPASQQESS) is disordered. A Nuclear localization signal motif is present at residues 705–712 (RTRRRKTA).

As to quaternary structure, interacts with PTST2; the interaction is essential for the initiation of starch granules biosynthesis in leaf chloroplasts, for the correct location of the process in the stromal spaces between the thylakoid membranes, and for the association of PTST2 with the thylakoid membranes. In terms of processing, predicted to be translocated into the thylakoid by the Tat system.

Its subcellular location is the plastid. The protein resides in the chloroplast. It is found in the chloroplast thylakoid membrane. The protein localises to the chloroplast stroma. It localises to the chloroplast nucleoid. Its subcellular location is the nucleus. The protein resides in the nucleus matrix. In terms of biological role, required for the initiation of starch granules biosynthesis in leaf chloroplasts. Anchored to the thylakoid membranes with its C-terminus facing into the stroma where it is essential for localizing PTST2 and SS4 to the stromal spaces between the thylakoid membranes in order to begin starch granule formation. Associated with leaf chloroplastic nucleoids in vivo. Binds to various chloroplastic double-stranded DNA fragments without particular sequence specificity in vitro. May function at the interface between nucleoids and thylakoids possibly by anchoring nucleoids to the thylakoid membrane system in mature chloroplasts. Likely to participate in nuclear architecture by connecting chromatin with the nuclear matrix and potentially with the nuclear envelope. The protein is MAR-binding filament-like protein 1-1 of Nicotiana tabacum (Common tobacco).